The following is a 755-amino-acid chain: ABC transporter G family member 2 (755 aa).

The ABC transporter domain occupies 98–358 (LSFTDLTYSV…FSEFKHPIPE (261 aa)). 151 to 158 (GASGSGKS) contacts ATP. The 211-residue stretch at 449–659 (IEMIVIGKRA…PYEGVLQNEF (211 aa)) folds into the ABC transmembrane type-2 domain. A run of 6 helical transmembrane segments spans residues 468–488 (LLGM…TMFT), 503–523 (FFAF…PVFL), 552–572 (IPAL…AVGL), 579–599 (FFFF…FVTF), 609–629 (LGFT…GFFI), and 728–748 (LWIT…TLLI).

This sequence belongs to the ABC transporter superfamily. ABCG family. Eye pigment precursor importer (TC 3.A.1.204) subfamily.

The protein localises to the membrane. This chain is ABC transporter G family member 2 (ABCG2), found in Arabidopsis thaliana (Mouse-ear cress).